Reading from the N-terminus, the 231-residue chain is Platelet-activating factor acetylhydrolase IB subunit alpha1 (231 aa).

The residue at position 2 (S2) is an N-acetylserine. S2 bears the Phosphoserine mark. Active-site residues include S47, D192, and H195.

It belongs to the 'GDSL' lipolytic enzyme family. Platelet-activating factor acetylhydrolase IB beta/gamma subunits subfamily. Forms a catalytic dimer which is either homodimer (alpha1/alpha1 homodimer) or heterodimer with PAFAH1B2 (alpha1/alpha2 heterodimer). Component of the cytosolic (PAF-AH (I)) heterotetrameric enzyme, which is composed of PAFAH1B1 (beta), PAFAH1B2 (alpha2) and PAFAH1B3 (alpha1) subunits. The catalytic activity of the enzyme resides in the alpha1 (PAFAH1B3) and alpha2 (PAFAH1B2) subunits, whereas the beta subunit (PAFAH1B1) has regulatory activity. Trimer formation is not essential for the catalytic activity. Interacts with VLDLR; this interaction may modulate the Reelin pathway. As to expression, in the adult, expressed in brain, skeletal muscle, kidney, thymus, spleen, colon, testis, ovary and peripheral blood leukocytes. In the fetus, highest expression occurs in brain.

The protein resides in the cytoplasm. It catalyses the reaction a 1-O-alkyl-2-acetyl-sn-glycero-3-phosphocholine + H2O = a 1-O-alkyl-sn-glycero-3-phosphocholine + acetate + H(+). The enzyme catalyses 1-O-hexadecyl-2-acetyl-sn-glycero-3-phosphocholine + H2O = 1-O-hexadecyl-sn-glycero-3-phosphocholine + acetate + H(+). It carries out the reaction 1-O-hexadecyl-2-acetyl-sn-glycero-3-phosphate + H2O = 1-O-hexadecyl-sn-glycero-3-phosphate + acetate + H(+). Its activity is regulated as follows. Beta subunit (PAFAH1B1) inhibits the acetylhydrolase activity of the alpha1/alpha1 catalytic homodimer. Functionally, alpha1 catalytic subunit of the cytosolic type I platelet-activating factor (PAF) acetylhydrolase (PAF-AH (I)) heterotetrameric enzyme that catalyzes the hydrolyze of the acetyl group at the sn-2 position of PAF and its analogs and modulates the action of PAF. The activity and substrate specificity of PAF-AH (I) are affected by its subunit composition. Both alpha1/alpha1 homodimer (PAFAH1B3/PAFAH1B3 homodimer) and alpha1/alpha2 heterodimer(PAFAH1B3/PAFAH1B2 heterodimer) hydrolyze 1-O-alkyl-2-acetyl-sn-glycero-3-phosphoric acid (AAGPA) more efficiently than PAF, but they have little hydrolytic activity towards 1-O-alkyl-2-acetyl-sn-glycero-3-phosphorylethanolamine (AAGPE). Plays an important role during the development of brain. In Homo sapiens (Human), this protein is Platelet-activating factor acetylhydrolase IB subunit alpha1.